Here is a 471-residue protein sequence, read N- to C-terminus: uncharacterized protein (471 aa).

The tract at residues 13–57 (KGGATIGATPMESDSSVSALSGSSASKVSRRGRRRSHLASKSSAP) is disordered. Residues 27–39 (SSVSALSGSSASK) are compositionally biased toward low complexity. The span at 40–50 (VSRRGRRRSHL) shows a compositional bias: basic residues. CCHC-type zinc fingers lie at residues 397–414 (YACH…ECRQ) and 417–434 (SVCR…KCQN). The gag-like cysteine motif stretch occupies residues 438–457 (CRNCRHRGQPSGHYMLSNAC).

The protein to corresponding ORF of B.mori (R1BM).

This is an uncharacterized protein from Drosophila melanogaster (Fruit fly).